The following is a 181-amino-acid chain: Large ribosomal subunit protein uL5 (181 aa).

Belongs to the universal ribosomal protein uL5 family. Part of the 50S ribosomal subunit; part of the 5S rRNA/L5/L18/L25 subcomplex. Contacts the 5S rRNA and the P site tRNA. Forms a bridge to the 30S subunit in the 70S ribosome.

Its function is as follows. This is one of the proteins that bind and probably mediate the attachment of the 5S RNA into the large ribosomal subunit, where it forms part of the central protuberance. In the 70S ribosome it contacts protein S13 of the 30S subunit (bridge B1b), connecting the 2 subunits; this bridge is implicated in subunit movement. Contacts the P site tRNA; the 5S rRNA and some of its associated proteins might help stabilize positioning of ribosome-bound tRNAs. The protein is Large ribosomal subunit protein uL5 of Sulfurovum sp. (strain NBC37-1).